We begin with the raw amino-acid sequence, 317 residues long: N-acetyl-gamma-glutamyl-phosphate reductase (317 aa).

C136 is a catalytic residue.

It belongs to the NAGSA dehydrogenase family. Type 1 subfamily.

The protein localises to the cytoplasm. The catalysed reaction is N-acetyl-L-glutamate 5-semialdehyde + phosphate + NADP(+) = N-acetyl-L-glutamyl 5-phosphate + NADPH + H(+). It functions in the pathway amino-acid biosynthesis; L-arginine biosynthesis; N(2)-acetyl-L-ornithine from L-glutamate: step 3/4. In terms of biological role, catalyzes the NADPH-dependent reduction of N-acetyl-5-glutamyl phosphate to yield N-acetyl-L-glutamate 5-semialdehyde. This is N-acetyl-gamma-glutamyl-phosphate reductase from Stenotrophomonas maltophilia (strain R551-3).